A 217-amino-acid chain; its full sequence is Photosynthetic NDH subunit of lumenal location 4, chloroplastic (217 aa).

A chloroplast-targeting transit peptide spans 1-34 (MAISTLTLTQSLYTRSFRPTIFFSSSSSSSFSCL). Cystine bridges form between cysteine 87-cysteine 99 and cysteine 188-cysteine 193. The PPIase FKBP-type domain maps to 112–211 (GVLVNIHYTA…LYDINFVEIY (100 aa)).

The protein belongs to the FKBP-type PPIase family. As to quaternary structure, part of the chloroplast NDH complex, composed of a mixture of chloroplast and nucleus encoded subunits. Component of the NDH lumenal subcomplex, at least composed of PnsL1, PnsL2, PnsL3, PnsL4 and PnsL5.

The protein resides in the plastid. It is found in the chloroplast thylakoid lumen. The catalysed reaction is [protein]-peptidylproline (omega=180) = [protein]-peptidylproline (omega=0). Functionally, NDH shuttles electrons from NAD(P)H:plastoquinone, via FMN and iron-sulfur (Fe-S) centers, to quinones in the photosynthetic chain and possibly in a chloroplast respiratory chain. The immediate electron acceptor for the enzyme in this species is believed to be plastoquinone. Couples the redox reaction to proton translocation, and thus conserves the redox energy in a proton gradient. PPIases accelerate the folding of proteins. It catalyzes the cis-trans isomerization of proline imidic peptide bonds in oligopeptides. Seems to be essential for stabilizing the NDH subcomplex A. The protein is Photosynthetic NDH subunit of lumenal location 4, chloroplastic of Arabidopsis thaliana (Mouse-ear cress).